The chain runs to 943 residues: UvrABC system protein A (943 aa).

32-39 (GLSGSGKS) is a binding site for ATP. The C4-type zinc finger occupies 251–278 (CPVCGFTVPELEPRLFSFNAPFGSCPTC). ABC transporter domains lie at 308–589 (WNPI…KKSI) and 609–937 (GSGR…QYLK). 641-648 (GVSGSGKS) contacts ATP. The segment at 740 to 766 (CEACSGDGIIKIEMHFLPDVYVPCEVC) adopts a C4-type zinc-finger fold.

It belongs to the ABC transporter superfamily. UvrA family. As to quaternary structure, forms a heterotetramer with UvrB during the search for lesions.

It is found in the cytoplasm. The UvrABC repair system catalyzes the recognition and processing of DNA lesions. UvrA is an ATPase and a DNA-binding protein. A damage recognition complex composed of 2 UvrA and 2 UvrB subunits scans DNA for abnormalities. When the presence of a lesion has been verified by UvrB, the UvrA molecules dissociate. This is UvrABC system protein A from Streptococcus mutans serotype c (strain ATCC 700610 / UA159).